The chain runs to 235 residues: MSETQDFAALEARLGHSFADRSHLVLALTHISSVKGQAVRVRSYQRLEFLGDHVLGSVVSHMLYAAFPKAEEGELSRRLAELVREEACAEVAQDMGLGPYLRLGPGEAQSGARQRRAILADVAEAVVAAVYLDGGYEAASALVERFWRGRLEAPRRPLRDPKTVLQEWAQARGLPPPVYRDVERSGPDHAPRFRVAVDLPGLECAEAEGGSKQTAQKAAASAFLAREGVVTESGE.

The RNase III domain maps to 7-135; sequence FAALEARLGH…VVAAVYLDGG (129 aa). Glutamate 48 is a binding site for Mg(2+). Aspartate 52 is a catalytic residue. Mg(2+)-binding residues include aspartate 121 and glutamate 124. Glutamate 124 is a catalytic residue. The DRBM domain occupies 160–229; sequence DPKTVLQEWA…ASAFLAREGV (70 aa).

Belongs to the ribonuclease III family. As to quaternary structure, homodimer. The cofactor is Mg(2+).

It localises to the cytoplasm. It carries out the reaction Endonucleolytic cleavage to 5'-phosphomonoester.. Digests double-stranded RNA. Involved in the processing of primary rRNA transcript to yield the immediate precursors to the large and small rRNAs (23S and 16S). Processes some mRNAs, and tRNAs when they are encoded in the rRNA operon. Processes pre-crRNA and tracrRNA of type II CRISPR loci if present in the organism. The chain is Ribonuclease 3 from Azorhizobium caulinodans (strain ATCC 43989 / DSM 5975 / JCM 20966 / LMG 6465 / NBRC 14845 / NCIMB 13405 / ORS 571).